Here is a 418-residue protein sequence, read N- to C-terminus: Probable aminotransferase Rv1178 (418 aa).

The interval 22–42 (GQGWHDRERPASGQGSGAAER) is disordered.

This sequence belongs to the class-I pyridoxal-phosphate-dependent aminotransferase family. It depends on pyridoxal 5'-phosphate as a cofactor.

The polypeptide is Probable aminotransferase Rv1178 (Mycobacterium tuberculosis (strain ATCC 25618 / H37Rv)).